The following is a 305-amino-acid chain: Ribonuclease BN (305 aa).

Zn(2+) is bound by residues His64, His66, Asp68, His69, His141, Asp212, and His270. Asp68 serves as the catalytic Proton acceptor.

This sequence belongs to the RNase Z family. RNase BN subfamily. As to quaternary structure, homodimer. Zn(2+) is required as a cofactor.

Its function is as follows. Zinc phosphodiesterase, which has both exoribonuclease and endoribonuclease activities. The sequence is that of Ribonuclease BN from Escherichia coli O139:H28 (strain E24377A / ETEC).